The chain runs to 431 residues: NADH-quinone oxidoreductase subunit F (431 aa).

Gly-54 to Gly-63 is a binding site for NAD(+). Gly-167–Ser-214 is an FMN binding site. [4Fe-4S] cluster contacts are provided by Cys-346, Cys-349, Cys-352, and Cys-392.

This sequence belongs to the complex I 51 kDa subunit family. FMN is required as a cofactor. [4Fe-4S] cluster serves as cofactor.

It catalyses the reaction a quinone + NADH + 5 H(+)(in) = a quinol + NAD(+) + 4 H(+)(out). Its function is as follows. NDH-1 shuttles electrons from NADH, via FMN and iron-sulfur (Fe-S) centers, to quinones in the respiratory chain. The immediate electron acceptor for the enzyme in this species is believed to be ubiquinone. Couples the redox reaction to proton translocation (for every two electrons transferred, four hydrogen ions are translocated across the cytoplasmic membrane), and thus conserves the redox energy in a proton gradient. This Rhodobacter capsulatus (Rhodopseudomonas capsulata) protein is NADH-quinone oxidoreductase subunit F (nuoF).